The primary structure comprises 2177 residues: Protein sidekick-2 (2177 aa).

The first 26 residues, 1 to 26 (MKGLGVPAAALLWGGLSALLPPSLPA), serve as a signal peptide directing secretion. The Extracellular portion of the chain corresponds to 27-1937 (DDVSPYFKTE…ANPFYEEWWF (1911 aa)). Ig-like C2-type domains follow at residues 31–113 (PYFK…TEVQ), 118–205 (GSFE…QPIT), 220–299 (PTII…SSVP), 313–401 (PQFV…TYLA), 407–496 (PNIT…ADLV), and 501–590 (TRIT…AHLR). C53 and C96 are oxidised to a cystine. N198 and N228 each carry an N-linked (GlcNAc...) asparagine glycan. 2 cysteine pairs are disulfide-bonded: C242–C289 and C335–C385. Residue N408 is glycosylated (N-linked (GlcNAc...) asparagine). 2 disulfide bridges follow: C428–C480 and C522–C574. N-linked (GlcNAc...) asparagine glycans are attached at residues N582, N614, N709, N748, N809, N941, and N953. Fibronectin type-III domains lie at 597-693 (APES…LPEE), 698-794 (PPQN…TLQG), 799-898 (PPGN…THED), 902-996 (PVGH…VPPE), 1000-1099 (APTN…TLQA), 1104-1202 (APAN…TRES), 1207-1304 (GPSN…TLDD), 1305-1402 (VPGP…TEKR), 1407-1504 (PPSK…TLQA), 1509-1626 (APTI…VGEA), 1631-1727 (APQN…TQQA), 1731-1826 (APGS…TGPG), and 1829-1928 (APGP…AQKA). N-linked (GlcNAc...) asparagine glycans are attached at residues N1107, N1210, N1261, N1346, N1462, N1580, N1593, N1675, N1694, N1746, and N1820. Residues 1938–1958 (LVVIALVGLIFILLLVFVLII) traverse the membrane as a helical segment. The Cytoplasmic segment spans residues 1959-2177 (RGQSKKYAKK…APIGGFSSFV (219 aa)). 2 disordered regions span residues 2044–2071 (AESS…VDPA) and 2103–2177 (QAYS…SSFV). Composition is skewed to polar residues over residues 2045–2063 (ESSS…QGSD) and 2119–2130 (PLSNSTSTQQGS). Over residues 2142–2151 (PQTPGNPPSQ) the composition is skewed to pro residues. A PDZ-binding motif is present at residues 2171 to 2177 (GGFSSFV).

It belongs to the sidekick family. In terms of assembly, homodimer; mediates homophilic interactions to promote cell adhesion. As to expression, expressed by non-overlapping subsets of retinal neurons. SDK1, SDK2, DSCAM and DSCAML1 are expressed in non-overlapping subsets of interneurons and retinal ganglion cells (RGCs) that form synapses in distinct inner plexiform layer (IPL) sublaminae.

It localises to the cell membrane. Its subcellular location is the synapse. Adhesion molecule that promotes lamina-specific synaptic connections in the retina. Expressed in specific subsets of interneurons and retinal ganglion cells (RGCs) and promotes synaptic connectivity via homophilic interactions. The sequence is that of Protein sidekick-2 from Gallus gallus (Chicken).